Here is a 422-residue protein sequence, read N- to C-terminus: Isocitrate dehydrogenase [NADP] (422 aa).

Thr94 contacts NADP(+). Residues Ser103, Asn105, Arg109, Arg119, and Arg143 each coordinate D-threo-isocitrate. Asp310 contributes to the Mg(2+) binding site. Residues His344–Tyr350, Asn357, Tyr396, and Arg400 each bind NADP(+).

It belongs to the isocitrate and isopropylmalate dehydrogenases family. Homodimer. The cofactor is Mg(2+). Requires Mn(2+) as cofactor.

It carries out the reaction D-threo-isocitrate + NADP(+) = 2-oxoglutarate + CO2 + NADPH. Its function is as follows. Catalyzes the oxidative decarboxylation of isocitrate to 2-oxoglutarate and carbon dioxide with the concomitant reduction of NADP(+). The protein is Isocitrate dehydrogenase [NADP] (icd) of Staphylococcus aureus (strain COL).